The sequence spans 240 residues: 14-3-3 protein 3 (240 aa).

This sequence belongs to the 14-3-3 family. Interacts with coactosin. Interacts with ACTO/actophorin.

It localises to the cytoplasm. It is found in the cell projection. The protein localises to the phagocytic cup. In terms of biological role, adapter protein which is required for phagocytosis and motility, probably by regulating actin cytoskeleton dynamics. During phagocytosis, plays a role in the initiation and/or formation of the phagocytic cup and is involved in the recruitment of the actin binding protein coactosin to the phagocytic cup. The chain is 14-3-3 protein 3 from Entamoeba histolytica (strain ATCC 30459 / HM-1:IMSS / ABRM).